Reading from the N-terminus, the 357-residue chain is Outer membrane porin protein OmpD (357 aa).

An N-terminal signal peptide occupies residues methionine 1 to alanine 21.

It belongs to the Gram-negative porin family. As to quaternary structure, homotrimer.

Its subcellular location is the cell outer membrane. In terms of biological role, forms pores that allow passive diffusion of small molecules across the outer membrane. This Citrobacter koseri (strain ATCC BAA-895 / CDC 4225-83 / SGSC4696) protein is Outer membrane porin protein OmpD (ompD).